We begin with the raw amino-acid sequence, 163 residues long: Interleukin-31 (163 aa).

Residues 1-23 (MIFHTGTTKPTLVLLCCIGTWLA) form the signal peptide. Residues Asn-55, Asn-84, and Asn-124 are each glycosylated (N-linked (GlcNAc...) asparagine).

It is found in the secreted. Functionally, activates STAT3 and possibly STAT1 and STAT5 through the IL31 heterodimeric receptor composed of IL31RA and OSMR. May function in skin immunity. Enhances myeloid progenitor cell survival in vitro. Induces RETNLA and serum amyloid A protein expression in macrophages. The protein is Interleukin-31 (Il31) of Mus musculus (Mouse).